Here is a 279-residue protein sequence, read N- to C-terminus: 30 kDa ribonucleoprotein, chloroplastic (279 aa).

The region spanning 87-165 (LKIFVGNLLF…RALRVNSGPP (79 aa)) is the RRM 1 domain. The disordered stretch occupies residues 156 to 187 (RALRVNSGPPPEKRENSSFRENSSFRGGSRGG). The segment at 166–193 (PEKRENSSFRENSSFRGGSRGGGSFDSS) is linker (Gly-rich). One can recognise an RRM 2 domain in the interval 194–272 (NRVYVGNLAW…RAIRVSPAEA (79 aa)).

In terms of tissue distribution, expressed at high levels in the leaves and seedlings, and lower levels are seen in the stems and roots.

It localises to the plastid. The protein resides in the chloroplast. Its function is as follows. Could be involved in splicing and/or processing of chloroplast RNA's. This Nicotiana plumbaginifolia (Leadwort-leaved tobacco) protein is 30 kDa ribonucleoprotein, chloroplastic.